Consider the following 147-residue polypeptide: Large ribosomal subunit protein bL9 (147 aa).

This sequence belongs to the bacterial ribosomal protein bL9 family.

Functionally, binds to the 23S rRNA. The chain is Large ribosomal subunit protein bL9 from Campylobacter hominis (strain ATCC BAA-381 / DSM 21671 / CCUG 45161 / LMG 19568 / NCTC 13146 / CH001A).